Here is a 146-residue protein sequence, read N- to C-terminus: Hemoglobin subunit beta (146 aa).

A Globin domain is found at 2-146 (FLTAEEKSLV…VANALAHKYH (145 aa)). A Phosphoserine modification is found at Ser-44. An N6-acetyllysine modification is found at Lys-59. Residue His-63 coordinates heme b. Lys-82 is modified (N6-acetyllysine). His-92 contacts heme b. Residue Cys-93 is modified to S-nitrosocysteine. Position 144 is an N6-acetyllysine (Lys-144).

Belongs to the globin family. As to quaternary structure, heterotetramer of two alpha chains and two beta chains. In terms of tissue distribution, red blood cells.

Functionally, involved in oxygen transport from the lung to the various peripheral tissues. In Proteles cristata (Aardwolf), this protein is Hemoglobin subunit beta (HBB).